Consider the following 64-residue polypeptide: Large ribosomal subunit protein bL35 (64 aa).

The protein belongs to the bacterial ribosomal protein bL35 family.

This is Large ribosomal subunit protein bL35 from Aliivibrio fischeri (strain ATCC 700601 / ES114) (Vibrio fischeri).